The chain runs to 149 residues: Large ribosomal subunit protein uL13 (149 aa).

The protein belongs to the universal ribosomal protein uL13 family. In terms of assembly, part of the 50S ribosomal subunit.

Functionally, this protein is one of the early assembly proteins of the 50S ribosomal subunit, although it is not seen to bind rRNA by itself. It is important during the early stages of 50S assembly. The sequence is that of Large ribosomal subunit protein uL13 from Prosthecochloris aestuarii (strain DSM 271 / SK 413).